Here is a 224-residue protein sequence, read N- to C-terminus: UPF0173 metal-dependent hydrolase Ta0764 (224 aa).

This sequence belongs to the UPF0173 family.

The chain is UPF0173 metal-dependent hydrolase Ta0764 from Thermoplasma acidophilum (strain ATCC 25905 / DSM 1728 / JCM 9062 / NBRC 15155 / AMRC-C165).